The sequence spans 811 residues: Endothelin-converting enzyme 2 (811 aa).

Residues 1–106 (MNVALQELGA…QLLGSRTQLE (106 aa)) lie on the Cytoplasmic side of the membrane. The disordered stretch occupies residues 22 to 64 (LRDEDAPETPVEGGASPDAMEVGKGASPFSPGPSPGMTPGTPR). Residues 107-127 (LVLAGASLLLAALLLGCLVAL) form a helical; Signal-anchor for type II membrane protein membrane-spanning segment. The Lumenal segment spans residues 128–811 (GVQYHRDPSH…MNPGQLCEVW (684 aa)). The region spanning 139 to 811 (TCLTEACIRV…MNPGQLCEVW (673 aa)) is the Peptidase M13 domain. 5 disulfide bridges follow: C140–C145, C163–C796, C171–C756, C227–C476, and C685–C808. Residues N207, N211, N252, N312, N357, N424, and N580 are each glycosylated (N-linked (GlcNAc...) asparagine). H648 provides a ligand contact to Zn(2+). E649 is an active-site residue. H652 is a binding site for Zn(2+). N-linked (GlcNAc...) asparagine glycosylation is found at N673 and N681. E708 provides a ligand contact to Zn(2+). D712 functions as the Proton donor in the catalytic mechanism.

Belongs to the peptidase M13 family. Zn(2+) serves as cofactor.

Its subcellular location is the golgi apparatus membrane. The protein localises to the cytoplasmic vesicle. It localises to the secretory vesicle membrane. The catalysed reaction is Hydrolysis of the 21-Trp-|-Val-22 bond in big endothelin to form endothelin 1.. Converts big endothelin-1 to endothelin-1. Also involved in the processing of various neuroendocrine peptides, including neurotensin, angiotensin I, substance P, proenkephalin-derived peptides, and prodynorphin-derived peptides. May play a role in amyloid-beta processing. The polypeptide is Endothelin-converting enzyme 2 (Homo sapiens (Human)).